A 65-amino-acid chain; its full sequence is Kunitz-type serine protease inhibitor IX (65 aa).

In terms of domain architecture, BPTI/Kunitz inhibitor spans 7–57 (CNLLPETGRCNALIPAFYYNSHLHKCQKFNYGGCGGNANNFKTIDECQRTC). 3 disulfide bridges follow: cysteine 7/cysteine 57, cysteine 16/cysteine 40, and cysteine 32/cysteine 53.

This sequence belongs to the venom Kunitz-type family. In terms of tissue distribution, expressed by the venom gland.

Its subcellular location is the secreted. Dual-function toxin that inhibits both serine proteases (high activity on chymotrypsin (Ki = 18 nM), and low activity on elastase) and voltage-gated potassium channels Kv1.3/KCNA3 (IC(50) = 120.0 nM). The protein is Kunitz-type serine protease inhibitor IX of Bungarus fasciatus (Banded krait).